We begin with the raw amino-acid sequence, 303 residues long: 2-(5''-triphosphoribosyl)-3'-dephosphocoenzyme-A synthase (303 aa).

Belongs to the CitG/MdcB family.

The enzyme catalyses 3'-dephospho-CoA + ATP = 2'-(5''-triphospho-alpha-D-ribosyl)-3'-dephospho-CoA + adenine. In terms of biological role, catalyzes the formation of 2-(5''-triphosphoribosyl)-3'-dephosphocoenzyme-A, the precursor of the prosthetic group of the holo-acyl carrier protein (gamma chain) of citrate lyase, from ATP and dephospho-CoA. The polypeptide is 2-(5''-triphosphoribosyl)-3'-dephosphocoenzyme-A synthase (Escherichia fergusonii (strain ATCC 35469 / DSM 13698 / CCUG 18766 / IAM 14443 / JCM 21226 / LMG 7866 / NBRC 102419 / NCTC 12128 / CDC 0568-73)).